The primary structure comprises 122 residues: Basic phospholipase A2 10 (122 aa).

7 cysteine pairs are disulfide-bonded: Cys26-Cys114, Cys28-Cys43, Cys42-Cys94, Cys48-Cys122, Cys49-Cys87, Cys56-Cys80, and Cys74-Cys85. Ca(2+)-binding residues include Tyr27, Gly29, and Gly31. The active site involves His46. Asp47 is a Ca(2+) binding site. The active site involves Asp88.

The cofactor is Ca(2+). In terms of tissue distribution, expressed by the venom gland.

The protein resides in the secreted. It catalyses the reaction a 1,2-diacyl-sn-glycero-3-phosphocholine + H2O = a 1-acyl-sn-glycero-3-phosphocholine + a fatty acid + H(+). Inhibited by chemical modifications mediated by p-BPB, anhydrous acetic acid and NBSF. Snake venom phospholipase A2 (PLA2) that has a strong dose-dependent anticoagulant effect. In vivo, intramuscular and intervenal injection causes muscle necrosis. Induces moderate edema in the mouse foot pad. PLA2 catalyzes the calcium-dependent hydrolysis of the 2-acyl groups in 3-sn-phosphoglycerides. This Crotalus durissus cumanensis (South American rattlesnake) protein is Basic phospholipase A2 10.